A 238-amino-acid chain; its full sequence is 3-deoxy-manno-octulosonate cytidylyltransferase (238 aa).

Belongs to the KdsB family.

It localises to the cytoplasm. The catalysed reaction is 3-deoxy-alpha-D-manno-oct-2-ulosonate + CTP = CMP-3-deoxy-beta-D-manno-octulosonate + diphosphate. It functions in the pathway nucleotide-sugar biosynthesis; CMP-3-deoxy-D-manno-octulosonate biosynthesis; CMP-3-deoxy-D-manno-octulosonate from 3-deoxy-D-manno-octulosonate and CTP: step 1/1. Its pathway is bacterial outer membrane biogenesis; lipopolysaccharide biosynthesis. In terms of biological role, activates KDO (a required 8-carbon sugar) for incorporation into bacterial lipopolysaccharide in Gram-negative bacteria. This is 3-deoxy-manno-octulosonate cytidylyltransferase from Nitratiruptor sp. (strain SB155-2).